A 104-amino-acid polypeptide reads, in one-letter code: Antitoxin HigA-2 (104 aa).

Residues 45 to 98 (IVSIREQFNMSRGVFARLLHTSSRTLENWEQGRSVPNGQAVTLLKLVQRHPETL) enclose the HTH cro/C1-type domain. A DNA-binding region (H-T-H motif) is located at residues 56 to 75 (RGVFARLLHTSSRTLENWEQ).

Functionally, antitoxin component of a type II toxin-antitoxin (TA) system that counteracts the effect of the HigB-2 toxin. Binds to its own promoter and regulates transcription of the higB-2/higA-2 operon. This chain is Antitoxin HigA-2 (higA-2), found in Vibrio cholerae serotype O1 (strain ATCC 39315 / El Tor Inaba N16961).